Here is a 1183-residue protein sequence, read N- to C-terminus: Translation initiation factor IF-2 (1183 aa).

2 disordered regions span residues 65-512 and 540-579; these read SSKN…KVHI and LARP…AMEL. Basic and acidic residues predominate over residues 83-99; the sequence is TQKDQKTEPKKKNHDQT. Positions 100-130 are enriched in polar residues; it reads ELSQAKLNTLLKPSQTLIKSQGSSQANNQKA. Residues 220 to 229 are compositionally biased toward basic and acidic residues; that stretch reads PKIDIQDKKP. Residues 231-270 show a composition bias toward polar residues; that stretch reads QPNNQKAKTRINQGEISPQKVGQGNIQKIKSQNKQNAPSR. The span at 288-304 shows a compositional bias: basic and acidic residues; it reads IRKEKPVNKPHTNEVRN. 2 stretches are compositionally biased toward polar residues: residues 321 to 336 and 357 to 367; these read ANRQ…NNRI and NRTTQGQNRPG. Over residues 485-499 the composition is skewed to basic and acidic residues; it reads GRPDWDDSAKLDALR. Basic residues-rich tracts occupy residues 544–553 and 560–574; these read SKPKVGKRNN and LKKR…RQRR. The tr-type G domain occupies 675–847; sequence RRPPVVTVMG…VLLVTEVEDL (173 aa). Positions 684–691 are G1; it reads GHVDHGKT. Residue 684 to 691 coordinates GTP; sequence GHVDHGKT. The tract at residues 709–713 is G2; sequence GITQH. Positions 734–737 are G3; the sequence is DTPG. GTP contacts are provided by residues 734–738 and 788–791; these read DTPGH and NKID. Residues 788–791 are G4; sequence NKID. Residues 824–826 form a G5 region; that stretch reads SAI.

The protein belongs to the TRAFAC class translation factor GTPase superfamily. Classic translation factor GTPase family. IF-2 subfamily.

It localises to the cytoplasm. Its function is as follows. One of the essential components for the initiation of protein synthesis. Protects formylmethionyl-tRNA from spontaneous hydrolysis and promotes its binding to the 30S ribosomal subunits. Also involved in the hydrolysis of GTP during the formation of the 70S ribosomal complex. The polypeptide is Translation initiation factor IF-2 (Prochlorococcus marinus (strain NATL2A)).